The chain runs to 689 residues: UvrABC system protein C (689 aa).

In terms of domain architecture, GIY-YIG spans 16-95 (TNPGVYRFRD…IKEFAPRFNI (80 aa)). The UVR domain maps to 208–243 (KPYIRELTRQMNEAAECMDFETAAARRDDVGALERV). A disordered region spans residues 316 to 337 (LAPAASGRRRTARHGSEDVVGQ).

This sequence belongs to the UvrC family. Interacts with UvrB in an incision complex.

The protein localises to the cytoplasm. Its function is as follows. The UvrABC repair system catalyzes the recognition and processing of DNA lesions. UvrC both incises the 5' and 3' sides of the lesion. The N-terminal half is responsible for the 3' incision and the C-terminal half is responsible for the 5' incision. The polypeptide is UvrABC system protein C (Kocuria rhizophila (strain ATCC 9341 / DSM 348 / NBRC 103217 / DC2201)).